Here is a 657-residue protein sequence, read N- to C-terminus: Sodium/glucose cotransporter 4 (657 aa).

The Extracellular portion of the chain corresponds to 1–24; sequence MPASPEPVTATPEPEEVPAKFTLE. Residues 25–45 traverse the membrane as a helical segment; sequence AADIAVVVVYFVFVLAVGIWS. Topologically, residues 46–79 are cytoplasmic; the sequence is SIRANRGTVGGYFLAGRSMTWWPIGASLMSSNVG. Residues 80 to 100 form a helical membrane-spanning segment; that stretch reads SGLFIGLAGTGAAGGLAVGGF. Residues 101 to 104 are Extracellular-facing; that stretch reads EWNA. Residues 105–125 traverse the membrane as a helical segment; sequence AWVLIALGWIFVPVYISAGVV. Residues 126-147 are Cytoplasmic-facing; that stretch reads TMPEYLRKRFGGQRIRIYMSVL. A helical membrane pass occupies residues 148 to 168; it reads SLILYILTKISTDIFSGALFI. At 169 to 180 the chain is on the extracellular side; that stretch reads QVSLGWDLYLST. The chain crosses the membrane as a helical span at residues 181–201; sequence VILLAVTALYTIAGGLTAVIY. At 202–207 the chain is on the cytoplasmic side; it reads TDALQT. A helical transmembrane segment spans residues 208–228; that stretch reads VIMVIGAFVLMFIAFDKVGWY. The Extracellular segment spans residues 229 to 265; that stretch reads EGLLVQYEKAAPALTVPNTTCHLPRSDAFHIFRDPVT. An N-linked (GlcNAc...) asparagine glycan is attached at asparagine 246. Residues 266–286 traverse the membrane as a helical segment; sequence GDIPWPGLIFGLTVLATWVWC. Over 287 to 307 the chain is Cytoplasmic; it reads TDQVIVQRSLSAKNLSHAKAG. Residues 308–328 form a helical membrane-spanning segment; it reads SVLGGYLKVFPMFFVVMPGMI. At 329–373 the chain is on the extracellular side; the sequence is SRALYPDEVACVDPDECQKICGAKVGCSNIAYPKLVVELMPVGMR. Residues 374 to 396 traverse the membrane as a helical segment; that stretch reads GLMIAVMMAALMSSLTSIFNSSS. Over 397 to 417 the chain is Cytoplasmic; the sequence is TLFTMDIWQRIRPRASEKELM. A helical membrane pass occupies residues 418–438; it reads VVGRVFILLLVALSIVWIPVI. At 439–451 the chain is on the extracellular side; the sequence is QTANSGQLFDYIQ. The chain crosses the membrane as a helical span at residues 452–472; it reads AITSFLSPPITTVFIMAIFWG. Over 473-478 the chain is Cytoplasmic; that stretch reads RVNEQG. The chain crosses the membrane as a helical span at residues 479 to 499; it reads AFWGLMVGLVVGMVRMIMEFV. The Extracellular segment spans residues 500-520; that stretch reads YGTPSCGETDLRPSLLKDVHY. A helical membrane pass occupies residues 521-541; it reads LYFALILLALTVLIITAVSLC. Residues 542 to 636 are Cytoplasmic-facing; it reads TAPIPEKHLV…SIEEDHMWKT (95 aa). Residues 637–657 form a helical membrane-spanning segment; sequence VCNVNALILLTANVFLWGYFA.

The protein belongs to the sodium:solute symporter (SSF) (TC 2.A.21) family.

The protein resides in the membrane. In terms of biological role, probable sodium-dependent sugar transporter. The protein is Sodium/glucose cotransporter 4 (slc5a9) of Danio rerio (Zebrafish).